We begin with the raw amino-acid sequence, 618 residues long: Alpha-dioxygenase PIOX (618 aa).

His157 (proton acceptor) is an active-site residue. Asp158 provides a ligand contact to Ca(2+). Heme b is bound at residue His162. Residues Thr210, Trp212, Asp214, and Ser216 each coordinate Ca(2+). Residue His311 participates in hexadecanoate binding. 3 residues coordinate heme b: His382, Arg479, and Arg483. Glu599 contacts hexadecanoate.

Belongs to the peroxidase family. It depends on heme b as a cofactor. Requires Ca(2+) as cofactor.

The catalysed reaction is a 1,2-saturated fatty acid + O2 = a (2R)-2-hydroperoxy fatty acid. It carries out the reaction (9Z,12Z)-octadecadienoate + O2 = (2R,9Z,12Z)-2-hydroperoxyoctadecadienoate. It catalyses the reaction hexadecanoate + O2 = (2R)-2-hydroperoxyhexadecanoate. The enzyme catalyses (9Z,12Z,15Z)-octadecatrienoate + O2 = (R)-2-hydroperoxy-(9Z,12Z,15Z)-octadecatrienoate. The catalysed reaction is tetradecanoate + O2 = (2R)-2-hydroperoxytetradecanoate. It carries out the reaction octadecanoate + O2 = (2R)-2-hydroperoxyoctadecanoate. It catalyses the reaction (9Z)-octadecenoate + O2 = (2R,9Z)-2-hydroperoxyoctadecenoate. Its function is as follows. Alpha-dioxygenase that catalyzes the primary oxygenation step of a variety of 14-20 carbon fatty acids, containing up to three unsaturated bonds, into their corresponding 2R-hydroperoxides. Involved in the production of oxylipins that function in cell signaling, wound healing, and protection from infection. The sequence is that of Alpha-dioxygenase PIOX from Oryza sativa subsp. japonica (Rice).